The chain runs to 388 residues: Succinate--CoA ligase [ADP-forming] subunit beta (388 aa).

Residues 9–244 (KQLFAEFGLP…PSQEDEREAH (236 aa)) form the ATP-grasp domain. ATP is bound by residues Lys-46, 53-55 (GRG), Glu-99, Ser-102, and Glu-107. Mg(2+) is bound by residues Asn-199 and Asp-213. Substrate contacts are provided by residues Asn-264 and 321-323 (GIV).

Belongs to the succinate/malate CoA ligase beta subunit family. As to quaternary structure, heterotetramer of two alpha and two beta subunits. It depends on Mg(2+) as a cofactor.

It carries out the reaction succinate + ATP + CoA = succinyl-CoA + ADP + phosphate. The enzyme catalyses GTP + succinate + CoA = succinyl-CoA + GDP + phosphate. It participates in carbohydrate metabolism; tricarboxylic acid cycle; succinate from succinyl-CoA (ligase route): step 1/1. Its function is as follows. Succinyl-CoA synthetase functions in the citric acid cycle (TCA), coupling the hydrolysis of succinyl-CoA to the synthesis of either ATP or GTP and thus represents the only step of substrate-level phosphorylation in the TCA. The beta subunit provides nucleotide specificity of the enzyme and binds the substrate succinate, while the binding sites for coenzyme A and phosphate are found in the alpha subunit. This chain is Succinate--CoA ligase [ADP-forming] subunit beta, found in Aliivibrio fischeri (strain ATCC 700601 / ES114) (Vibrio fischeri).